The primary structure comprises 55 residues: MAECDDRPNLVERAVMKLGEPKNQARLLQVAWRISLLMMVIGFIIIIKTISPNFM.

As to quaternary structure, has multiple subunits, A(3), B(3), C, D, E, F, G, I and K(x); there may be a few other subunits as well.

It localises to the cell membrane. In terms of biological role, component of the A-type ATP synthase that produces ATP from ADP in the presence of a proton gradient across the membrane. This is A-type ATP synthase subunit G (atpG) from Methanosarcina mazei (strain ATCC BAA-159 / DSM 3647 / Goe1 / Go1 / JCM 11833 / OCM 88) (Methanosarcina frisia).